The following is a 184-amino-acid chain: ATP-dependent protease subunit HslV (184 aa).

Thr8 is an active-site residue. Residues Gly165, Asp168, and Thr171 each coordinate Na(+).

The protein belongs to the peptidase T1B family. HslV subfamily. In terms of assembly, a double ring-shaped homohexamer of HslV is capped on each side by a ring-shaped HslU homohexamer. The assembly of the HslU/HslV complex is dependent on binding of ATP.

The protein localises to the cytoplasm. It carries out the reaction ATP-dependent cleavage of peptide bonds with broad specificity.. With respect to regulation, allosterically activated by HslU binding. Its function is as follows. Protease subunit of a proteasome-like degradation complex believed to be a general protein degrading machinery. The chain is ATP-dependent protease subunit HslV from Pediococcus pentosaceus (strain ATCC 25745 / CCUG 21536 / LMG 10740 / 183-1w).